Reading from the N-terminus, the 492-residue chain is Fibroblast growth factor receptor substrate 3 (492 aa).

The N-myristoyl glycine moiety is linked to residue Gly-2. The 103-residue stretch at 13–115 (VPDNHPTKFK…QCNSINVMEE (103 aa)) folds into the IRS-type PTB domain. 3 disordered regions span residues 153 to 173 (GEGPRFSAPRRLSTSSLRHPS), 338 to 455 (QLGG…SDSY), and 467 to 492 (SNLQRALPRDDGTARKTRHNSTDLPL).

In terms of assembly, binds NTRK1. Binds FGFR1, NGFR, GRB2, PTPN11 and ERK2. Post-translationally, phosphorylated by ULK2 in vitro. Phosphorylated on tyrosine residues upon stimulation by BFGF or NGFB.

It is found in the membrane. Its function is as follows. Adapter protein that links FGF and NGF receptors to downstream signaling pathways. Involved in the activation of MAP kinases. Down-regulates ERK2 signaling by interfering with the phosphorylation and nuclear translocation of ERK2. The polypeptide is Fibroblast growth factor receptor substrate 3 (FRS3) (Homo sapiens (Human)).